A 970-amino-acid chain; its full sequence is Disks large 1 tumor suppressor protein (970 aa).

Residues 4–64 form the L27 domain; it reads KKQEAHRALE…FYELTLLDDS (61 aa). The tract at residues 161-209 is disordered; the sequence is TENAKEPTVEQQQKQQQAQQRSSRSPQQQNPQQQQGSKSRSGSQTVNGD. Low complexity predominate over residues 171–204; it reads QQQKQQQAQQRSSRSPQQQNPQQQQGSKSRSGSQ. 2 PDZ domains span residues 216–303 and 330–421; these read DIQL…KRKR and EIDL…GKTQ. The segment at 424-477 is disordered; that stretch reads TTSASGGGGGGLSSGQQLSQSQSQLATSQSQSQVHQQQHATPMVNSQSTEPGSR. Positions 437–462 are enriched in low complexity; that stretch reads SGQQLSQSQSQLATSQSQSQVHQQQH. Residues 466-477 show a composition bias toward polar residues; the sequence is MVNSQSTEPGSR. Serine 496 carries the phosphoserine modification. The PDZ 3 domain maps to 506–587; it reads TITIQKGPQG…VVTLLAQYRP (82 aa). The SH3 domain occupies 620–690; that stretch reads KRSLYVRALF…PSKRRWERKM (71 aa). Threonine 714 bears the Phosphothreonine mark. Residues 780–955 form the Guanylate kinase-like domain; that stretch reads TRPVIILGPL…IYSKVKSMIW (176 aa).

Belongs to the MAGUK family. In terms of tissue distribution, during the cellular blastoderm stage, isoform B, isoform F, isoform H, isoform I and isoform L expression is localized to the cell borders. From stage 11 onwards, expression is found predominantly in the developing nervous system: axon bundles in the ventral cord and the brain. Stage 14 and 15 embryos exhibit expression in the developing body wall muscle. Expression in neuropil regions of the CNS and at NMJs persists through to larval development. Other isoforms show expression in embryonic epithelial cells. In larvae, expression is seen as a belt around salivary glands, imaginal disks and proventriculus. Expressed in adult reproductive tissues. In epithelia, coexpressed with scrib throughout development.

The protein resides in the cytoplasm. It is found in the cell membrane. It localises to the basolateral cell membrane. The protein localises to the cytoskeleton. Its subcellular location is the cell junction. The protein resides in the septate junction. Its function is as follows. During embryonic development, some isoforms are essential for proper neuronal differentiation and organization. Required for cell polarity; maintenance of apicobasal polarity. Plays a critical role at septate junctions in cellular growth control during larval development. The presence of a guanylate kinase domain suggests involvement in cellular adhesion as well as signal transduction to control cellular proliferation. In Drosophila melanogaster (Fruit fly), this protein is Disks large 1 tumor suppressor protein (dlg1).